The following is a 448-amino-acid chain: Chaperone SurA (448 aa).

An N-terminal signal peptide occupies residues Met1–Ala27. PpiC domains follow at residues Gln185 to Glu288 and Ile301 to Gly399.

Its subcellular location is the periplasm. It catalyses the reaction [protein]-peptidylproline (omega=180) = [protein]-peptidylproline (omega=0). In terms of biological role, chaperone involved in the correct folding and assembly of outer membrane proteins. Recognizes specific patterns of aromatic residues and the orientation of their side chains, which are found more frequently in integral outer membrane proteins. May act in both early periplasmic and late outer membrane-associated steps of protein maturation. The polypeptide is Chaperone SurA (Burkholderia pseudomallei (strain 1710b)).